The chain runs to 65 residues: MAVPKRRHSKSRTRKRRSTYYNELEPPQLMECNNCGNPKVMHRACKHCGHYRGRQVIEPSDELIA.

Basic residues predominate over residues 1 to 18; sequence MAVPKRRHSKSRTRKRRS. The disordered stretch occupies residues 1–20; the sequence is MAVPKRRHSKSRTRKRRSTY.

The protein belongs to the bacterial ribosomal protein bL32 family.

The sequence is that of Large ribosomal subunit protein bL32 from Salinibacter ruber (strain DSM 13855 / M31).